We begin with the raw amino-acid sequence, 84 residues long: MNYLVMISFALLLMTGVESVRDAYIAKPENCVYHCATNEGCNKLCTDNGAESGYCQWGGKYGNACWCIKLPDDVPIRVPGKCHR.

Residues 1–19 form the signal peptide; that stretch reads MNYLVMISFALLLMTGVES. An LCN-type CS-alpha/beta domain is found at 21–83; sequence RDAYIAKPEN…VPIRVPGKCH (63 aa). Cystine bridges form between Cys31–Cys82, Cys35–Cys55, Cys41–Cys65, and Cys45–Cys67. Residue Arg84 is a propeptide, removed by a carboxypeptidase.

It belongs to the long (4 C-C) scorpion toxin superfamily. Sodium channel inhibitor family. Alpha subfamily. In terms of tissue distribution, expressed by the venom gland.

The protein resides in the secreted. Alpha toxins bind voltage-independently at site-3 of sodium channels (Nav) and inhibit the inactivation of the activated channels, thereby blocking neuronal transmission. This recombinant toxin selectively inhibits the fast inactivation of mNav1.4/SCN4A (EC(50)=82.3 nM) (tested in HEK293 cells). The chain is Neurotoxin BmK-M11 from Olivierus martensii (Manchurian scorpion).